Consider the following 367-residue polypeptide: Peptide chain release factor 2 (367 aa).

Q254 bears the N5-methylglutamine mark.

It belongs to the prokaryotic/mitochondrial release factor family. Post-translationally, methylated by PrmC. Methylation increases the termination efficiency of RF2.

The protein resides in the cytoplasm. Its function is as follows. Peptide chain release factor 2 directs the termination of translation in response to the peptide chain termination codons UGA and UAA. This Burkholderia mallei (strain ATCC 23344) protein is Peptide chain release factor 2.